The chain runs to 199 residues: ATP-dependent Clp protease proteolytic subunit (199 aa).

S99 (nucleophile) is an active-site residue. Residue H124 is part of the active site.

This sequence belongs to the peptidase S14 family. In terms of assembly, fourteen ClpP subunits assemble into 2 heptameric rings which stack back to back to give a disk-like structure with a central cavity, resembling the structure of eukaryotic proteasomes.

It localises to the cytoplasm. The enzyme catalyses Hydrolysis of proteins to small peptides in the presence of ATP and magnesium. alpha-casein is the usual test substrate. In the absence of ATP, only oligopeptides shorter than five residues are hydrolyzed (such as succinyl-Leu-Tyr-|-NHMec, and Leu-Tyr-Leu-|-Tyr-Trp, in which cleavage of the -Tyr-|-Leu- and -Tyr-|-Trp bonds also occurs).. In terms of biological role, cleaves peptides in various proteins in a process that requires ATP hydrolysis. Has a chymotrypsin-like activity. Plays a major role in the degradation of misfolded proteins. In Moorella thermoacetica (strain ATCC 39073 / JCM 9320), this protein is ATP-dependent Clp protease proteolytic subunit.